Reading from the N-terminus, the 939-residue chain is Vacuolar membrane protease (939 aa).

Residues 1-11 (MGFNSIFKFRK) are Cytoplasmic-facing. The helical transmembrane segment at 12–32 (TSLSLLLFAVYFIIGILYFID) threads the bilayer. Residues 33 to 356 (KTRYKHSLPI…TFVAIPSTKL (324 aa)) are Vacuolar-facing. N-linked (GlcNAc...) asparagine glycosylation is found at Asn59, Asn88, and Asn114. 2 residues coordinate Zn(2+): His149 and Asp161. Catalysis depends on Glu193, which acts as the Proton acceptor. Zn(2+)-binding residues include Glu194, Glu219, and His293. A glycan (N-linked (GlcNAc...) asparagine) is linked at Asn326. Residues 357–377 (FWINIALLIIMPIISIFLFSI) traverse the membrane as a helical segment. At 378-388 (VKKYNNEIIDS) the chain is on the cytoplasmic side. The chain crosses the membrane as a helical span at residues 389 to 409 (GNIWWRLPISAMSSGTIIIFT). At 410 to 424 (TKLIMKWNPYILSRN) the chain is on the vacuolar side. The chain crosses the membrane as a helical span at residues 425-445 (FLLPLIGLTFEFIILNSYILT). The Cytoplasmic segment spans residues 446-453 (MFENLSSS). A helical transmembrane segment spans residues 454–474 (FDFKTIAINEISFLFWIVLAY). Over 475-491 (QTWKLYDNNYQNTGIYP) the chain is Vacuolar. The helical transmembrane segment at 492–512 (FTICYIVMATAGNIGYLFLIF) threads the bilayer. The Cytoplasmic segment spans residues 513 to 588 (KNIEIVEDEE…NQRTILKESK (76 aa)). Residues 540–552 (YRDEINGRDDSSR) show a composition bias toward basic and acidic residues. The segment at 540-561 (YRDEINGRDDSSRDSNSASIPT) is disordered. The chain crosses the membrane as a helical span at residues 589–609 (LVYNYDWIIEFLLVVPFSTFL). Topologically, residues 610-636 (LYNSLELIMDAVNQTIQETGDLYKVYK) are vacuolar. Asn622 carries an N-linked (GlcNAc...) asparagine glycan. A helical transmembrane segment spans residues 637–657 (ILAIGSILISIPTLPFAYKIG). Topologically, residues 658 to 663 (CQLGKT) are cytoplasmic. Residues 664 to 684 (LTFISIGCLLISMALAPFTEM) form a helical membrane-spanning segment. The Vacuolar portion of the chain corresponds to 685–939 (NPIKFRFMQV…LVKLTEAMVL (255 aa)). Residues Asn810 and Asn820 are each glycosylated (N-linked (GlcNAc...) asparagine).

It belongs to the peptidase M28 family. Zn(2+) is required as a cofactor.

It is found in the vacuole membrane. Functionally, may be involved in vacuolar sorting and osmoregulation. This Vanderwaltozyma polyspora (strain ATCC 22028 / DSM 70294 / BCRC 21397 / CBS 2163 / NBRC 10782 / NRRL Y-8283 / UCD 57-17) (Kluyveromyces polysporus) protein is Vacuolar membrane protease.